We begin with the raw amino-acid sequence, 227 residues long: Phosphatidylserine decarboxylase proenzyme (227 aa).

The active-site Schiff-base intermediate with substrate; via pyruvic acid is S184. A Pyruvic acid (Ser); by autocatalysis modification is found at S184.

It belongs to the phosphatidylserine decarboxylase family. PSD-A subfamily. As to quaternary structure, heterodimer of a large membrane-associated beta subunit and a small pyruvoyl-containing alpha subunit. Pyruvate serves as cofactor. Is synthesized initially as an inactive proenzyme. Formation of the active enzyme involves a self-maturation process in which the active site pyruvoyl group is generated from an internal serine residue via an autocatalytic post-translational modification. Two non-identical subunits are generated from the proenzyme in this reaction, and the pyruvate is formed at the N-terminus of the alpha chain, which is derived from the carboxyl end of the proenzyme. The post-translation cleavage follows an unusual pathway, termed non-hydrolytic serinolysis, in which the side chain hydroxyl group of the serine supplies its oxygen atom to form the C-terminus of the beta chain, while the remainder of the serine residue undergoes an oxidative deamination to produce ammonia and the pyruvoyl prosthetic group on the alpha chain.

It is found in the cell membrane. It carries out the reaction a 1,2-diacyl-sn-glycero-3-phospho-L-serine + H(+) = a 1,2-diacyl-sn-glycero-3-phosphoethanolamine + CO2. It functions in the pathway phospholipid metabolism; phosphatidylethanolamine biosynthesis; phosphatidylethanolamine from CDP-diacylglycerol: step 2/2. In terms of biological role, catalyzes the formation of phosphatidylethanolamine (PtdEtn) from phosphatidylserine (PtdSer). The polypeptide is Phosphatidylserine decarboxylase proenzyme (Ehrlichia ruminantium (strain Welgevonden)).